A 357-amino-acid chain; its full sequence is D-alanine--D-alanine ligase A (357 aa).

The ATP-grasp domain maps to 143–348 (KRLLREAGLA…YSKVIDVLIE (206 aa)). 171 to 226 (AGALGLPFFAKPARQGSSFGVSKVHDRDGFEQAVETALRYDSKALIEEFVDGREIE) is a binding site for ATP. Residues D302, E315, and N317 each coordinate Mg(2+).

The protein belongs to the D-alanine--D-alanine ligase family. Requires Mg(2+) as cofactor. Mn(2+) serves as cofactor.

It is found in the cytoplasm. The enzyme catalyses 2 D-alanine + ATP = D-alanyl-D-alanine + ADP + phosphate + H(+). It participates in cell wall biogenesis; peptidoglycan biosynthesis. Cell wall formation. This Mesorhizobium japonicum (strain LMG 29417 / CECT 9101 / MAFF 303099) (Mesorhizobium loti (strain MAFF 303099)) protein is D-alanine--D-alanine ligase A.